Here is a 214-residue protein sequence, read N- to C-terminus: NADH-quinone oxidoreductase subunit C (214 aa).

This sequence belongs to the complex I 30 kDa subunit family. NDH-1 is composed of 14 different subunits. Subunits NuoB, C, D, E, F, and G constitute the peripheral sector of the complex.

The protein localises to the cell inner membrane. It catalyses the reaction a quinone + NADH + 5 H(+)(in) = a quinol + NAD(+) + 4 H(+)(out). Its function is as follows. NDH-1 shuttles electrons from NADH, via FMN and iron-sulfur (Fe-S) centers, to quinones in the respiratory chain. The immediate electron acceptor for the enzyme in this species is believed to be ubiquinone. Couples the redox reaction to proton translocation (for every two electrons transferred, four hydrogen ions are translocated across the cytoplasmic membrane), and thus conserves the redox energy in a proton gradient. This Caulobacter sp. (strain K31) protein is NADH-quinone oxidoreductase subunit C.